Consider the following 313-residue polypeptide: Formimidoylglutamase (313 aa).

Mn(2+)-binding residues include H130, D155, H157, D159, D241, and D243.

The protein belongs to the arginase family. Requires Mn(2+) as cofactor.

It catalyses the reaction N-formimidoyl-L-glutamate + H2O = formamide + L-glutamate. It functions in the pathway amino-acid degradation; L-histidine degradation into L-glutamate; L-glutamate from N-formimidoyl-L-glutamate (hydrolase route): step 1/1. Catalyzes the conversion of N-formimidoyl-L-glutamate to L-glutamate and formamide. In Salmonella newport (strain SL254), this protein is Formimidoylglutamase.